The chain runs to 109 residues: Flagellar hook-basal body complex protein FliE (109 aa).

It belongs to the FliE family.

It localises to the bacterial flagellum basal body. This is Flagellar hook-basal body complex protein FliE from Pseudomonas fluorescens (strain Pf0-1).